The chain runs to 249 residues: DNA repair protein RecO (249 aa).

Belongs to the RecO family.

Functionally, involved in DNA repair and RecF pathway recombination. This is DNA repair protein RecO from Leptospira biflexa serovar Patoc (strain Patoc 1 / Ames).